The sequence spans 114 residues: Large ribosomal subunit protein uL22 (114 aa).

Belongs to the universal ribosomal protein uL22 family. In terms of assembly, part of the 50S ribosomal subunit.

Functionally, this protein binds specifically to 23S rRNA; its binding is stimulated by other ribosomal proteins, e.g. L4, L17, and L20. It is important during the early stages of 50S assembly. It makes multiple contacts with different domains of the 23S rRNA in the assembled 50S subunit and ribosome. In terms of biological role, the globular domain of the protein is located near the polypeptide exit tunnel on the outside of the subunit, while an extended beta-hairpin is found that lines the wall of the exit tunnel in the center of the 70S ribosome. This is Large ribosomal subunit protein uL22 from Alcanivorax borkumensis (strain ATCC 700651 / DSM 11573 / NCIMB 13689 / SK2).